The following is a 346-amino-acid chain: Protein tas (346 aa).

The Proton donor role is filled by Tyr53. Residue 234–244 (SCLGFGTLTGK) participates in NADP(+) binding.

This sequence belongs to the aldo/keto reductase family. Aldo/keto reductase 2 subfamily.

The sequence is that of Protein tas (tas) from Escherichia coli (strain K12).